We begin with the raw amino-acid sequence, 247 residues long: Proteasome subunit alpha (247 aa).

This sequence belongs to the peptidase T1A family. In terms of assembly, the 20S proteasome core is composed of 14 alpha and 14 beta subunits that assemble into four stacked heptameric rings, resulting in a barrel-shaped structure. The two inner rings, each composed of seven catalytic beta subunits, are sandwiched by two outer rings, each composed of seven alpha subunits. The catalytic chamber with the active sites is on the inside of the barrel. Has a gated structure, the ends of the cylinder being occluded by the N-termini of the alpha-subunits. Is capped at one or both ends by the proteasome regulatory ATPase, PAN.

It localises to the cytoplasm. With respect to regulation, the formation of the proteasomal ATPase PAN-20S proteasome complex, via the docking of the C-termini of PAN into the intersubunit pockets in the alpha-rings, triggers opening of the gate for substrate entry. Interconversion between the open-gate and close-gate conformations leads to a dynamic regulation of the 20S proteasome proteolysis activity. Functionally, component of the proteasome core, a large protease complex with broad specificity involved in protein degradation. This Methanosarcina thermophila protein is Proteasome subunit alpha.